Here is a 406-residue protein sequence, read N- to C-terminus: RING finger protein PSH1 (406 aa).

The RING-type zinc-finger motif lies at 30–72; the sequence is CSICHDYMFVPMMTPCGHNYCYGCLNTWFASNTQKELACPQCR. A phosphoserine mark is found at Ser-143 and Ser-191. The interval 209 to 406 is disordered; that stretch reads RFASTNPFAN…RVVLGDSDDE (198 aa). Acidic residues-rich tracts occupy residues 223 to 232, 256 to 274, and 281 to 291; these read SSEDDDSSEE, AVDD…EEMD, and IEDDEDDEDED. At Thr-310 the chain carries Phosphothreonine. The residue at position 403 (Ser-403) is a Phosphoserine.

Interacts with POB3 and SPT16.

The protein resides in the nucleus. This Saccharomyces cerevisiae (strain ATCC 204508 / S288c) (Baker's yeast) protein is RING finger protein PSH1 (PSH1).